Consider the following 467-residue polypeptide: Acyl-lipid (8-3)-desaturase B (467 aa).

A Cytochrome b5 heme-binding domain is found at 12–89 (LKLYTWDEVS…IKQYEIGYIS (78 aa)). Heme contacts are provided by H47 and H70. A run of 2 helical transmembrane segments spans residues 123 to 143 (VSVG…VTYY) and 152 to 172 (FWLN…FGLH). The Histidine box-1 motif lies at 175–179 (HDACH). A helical membrane pass occupies residues 187-207 (MTWKILGATFDLFAGASFYAW). The short motif at 211–216 (HVIGHH) is the Histidine box-2 element. Transmembrane regions (helical) follow at residues 293 to 313 (AIFI…PLIY) and 317 to 337 (FSHL…YLAI). The Histidine box-3 signature appears at 400-404 (QVIHH).

This sequence belongs to the fatty acid desaturase type 1 family. Fe(2+) is required as a cofactor.

It is found in the membrane. The enzyme catalyses an (8Z,11Z,14Z)-icosatrienoyl-containing glycerolipid + 2 Fe(II)-[cytochrome b5] + O2 + 2 H(+) = (5Z,8Z,11Z,14Z)-eicosatetraenoyl-containing glycerolipid + 2 Fe(III)-[cytochrome b5] + 2 H2O. It carries out the reaction an (8Z,11Z,14Z,17Z)-eicosatetraenoyl-containing glycerolipid + 2 Fe(II)-[cytochrome b5] + O2 + 2 H(+) = a (5Z,8Z,11Z,14Z,17Z)-eicosapentaenoyl-containing glycerolipid + 2 Fe(III)-[cytochrome b5] + 2 H2O. In terms of biological role, fatty acid desaturase that introduces a cis double bond at the 5-position in 18-carbon polyunsaturated fatty acids. This is Acyl-lipid (8-3)-desaturase B (fadB) from Dictyostelium discoideum (Social amoeba).